The sequence spans 625 residues: tRNA-guanine(15) transglycosylase (625 aa).

D86 (nucleophile) is an active-site residue. 2 residues coordinate substrate: D121 and G184. One can recognise a PUA domain in the interval 546-621 (GLRVVVDDES…VAVKVHEGVN (76 aa)).

The protein belongs to the archaeosine tRNA-ribosyltransferase family. Zn(2+) serves as cofactor.

It catalyses the reaction guanosine(15) in tRNA + 7-cyano-7-deazaguanine = 7-cyano-7-carbaguanosine(15) in tRNA + guanine. It participates in tRNA modification; archaeosine-tRNA biosynthesis. In terms of biological role, exchanges the guanine residue with 7-cyano-7-deazaguanine (preQ0) at position 15 in the dihydrouridine loop (D-loop) of archaeal tRNAs. In Picrophilus torridus (strain ATCC 700027 / DSM 9790 / JCM 10055 / NBRC 100828 / KAW 2/3), this protein is tRNA-guanine(15) transglycosylase.